The primary structure comprises 508 residues: Glycerol kinase (508 aa).

Position 14 (T14) interacts with ADP. ATP-binding residues include T14, T15, and S16. T14 serves as a coordination point for sn-glycerol 3-phosphate. R18 contributes to the ADP binding site. R84, E85, and Y136 together coordinate sn-glycerol 3-phosphate. Glycerol is bound by residues R84, E85, and Y136. At H232 the chain carries Phosphohistidine; by HPr. Residue D246 coordinates sn-glycerol 3-phosphate. The glycerol site is built by D246 and Q247. Residues T268 and G311 each contribute to the ADP site. ATP is bound by residues T268, G311, Q315, and G412. G412 and N416 together coordinate ADP.

The protein belongs to the FGGY kinase family. As to quaternary structure, homotetramer and homodimer (in equilibrium). The phosphoenolpyruvate-dependent sugar phosphotransferase system (PTS), including enzyme I, and histidine-containing protein (HPr) are required for the phosphorylation, which leads to the activation of the enzyme.

It catalyses the reaction glycerol + ATP = sn-glycerol 3-phosphate + ADP + H(+). The protein operates within polyol metabolism; glycerol degradation via glycerol kinase pathway; sn-glycerol 3-phosphate from glycerol: step 1/1. With respect to regulation, activated by phosphorylation and inhibited by fructose 1,6-bisphosphate (FBP). Its function is as follows. Key enzyme in the regulation of glycerol uptake and metabolism. Catalyzes the phosphorylation of glycerol to yield sn-glycerol 3-phosphate. The polypeptide is Glycerol kinase (Streptococcus pyogenes serotype M12 (strain MGAS2096)).